We begin with the raw amino-acid sequence, 129 residues long: Histone H2B.1 (129 aa).

Positions M1–P17 are enriched in basic and acidic residues. Residues M1–R35 form a disordered region. K5 and K6 each carry N6-acetyllysine; alternate. Glycyl lysine isopeptide (Lys-Gly) (interchain with G-Cter in SUMO); alternate cross-links involve residues K5 and K6. The residue at position 9 (S9) is a Phosphoserine. N6-acetyllysine is present on K10. K15 carries the post-translational modification N6-acetyllysine; alternate. Residue K15 forms a Glycyl lysine isopeptide (Lys-Gly) (interchain with G-Cter in SUMO); alternate linkage. K16 is covalently cross-linked (Glycyl lysine isopeptide (Lys-Gly) (interchain with G-Cter in SUMO)). K122 participates in a covalent cross-link: Glycyl lysine isopeptide (Lys-Gly) (interchain with G-Cter in ubiquitin).

It belongs to the histone H2B family. The nucleosome is a histone octamer containing two molecules each of H2A, H2B, H3 and H4 assembled in one H3-H4 heterotetramer and two H2A-H2B heterodimers. The octamer wraps approximately 147 bp of DNA. Monoubiquitinated by the UBC2-BRE1 complex to form H2BK123ub1. H2BK123ub1 gives a specific tag for epigenetic transcriptional activation and is also prerequisite for H3K4me and H3K79me formation. H2BK123ub1 also modulates the formation of double-strand breaks during meiosis and is a prerequisite for DNA-damage checkpoint activation. In terms of processing, phosphorylated by STE20 to form H2BS10ph during progression through meiotic prophase. May be correlated with chromosome condensation. Post-translationally, acetylated by GCN5 to form H2BK11ac and H2BK16ac. H2BK16ac can also be formed by ESA1. Acetylation of N-terminal lysines and particularly formation of H2BK11acK16ac has a positive effect on transcription. Sumoylation to form H2BK6su or H2BK7su, and probably also H2BK16su or H2BK17su, occurs preferentially near the telomeres and represses gene transcription.

The protein resides in the nucleus. It localises to the chromosome. Core component of nucleosome. Nucleosomes wrap and compact DNA into chromatin, limiting DNA accessibility to the cellular machineries which require DNA as a template. Histones thereby play a central role in transcription regulation, DNA repair, DNA replication and chromosomal stability. DNA accessibility is regulated via a complex set of post-translational modifications of histones, also called histone code, and nucleosome remodeling. The protein is Histone H2B.1 (HTB1) of Candida glabrata (strain ATCC 2001 / BCRC 20586 / JCM 3761 / NBRC 0622 / NRRL Y-65 / CBS 138) (Yeast).